The chain runs to 369 residues: Phospho-N-acetylmuramoyl-pentapeptide-transferase (369 aa).

10 consecutive transmembrane segments (helical) span residues Ile2–Phe22, Ala55–Ile75, Pro82–Leu102, Ala120–Ala140, Leu163–Ile183, Leu196–Ile216, Pro240–Trp260, Ile267–Leu287, Ile292–Val312, and Ile349–Phe369.

This sequence belongs to the glycosyltransferase 4 family. MraY subfamily. Requires Mg(2+) as cofactor.

The protein localises to the cell membrane. It carries out the reaction UDP-N-acetyl-alpha-D-muramoyl-L-alanyl-gamma-D-glutamyl-meso-2,6-diaminopimeloyl-D-alanyl-D-alanine + di-trans,octa-cis-undecaprenyl phosphate = di-trans,octa-cis-undecaprenyl diphospho-N-acetyl-alpha-D-muramoyl-L-alanyl-D-glutamyl-meso-2,6-diaminopimeloyl-D-alanyl-D-alanine + UMP. It participates in cell wall biogenesis; peptidoglycan biosynthesis. In terms of biological role, catalyzes the initial step of the lipid cycle reactions in the biosynthesis of the cell wall peptidoglycan: transfers peptidoglycan precursor phospho-MurNAc-pentapeptide from UDP-MurNAc-pentapeptide onto the lipid carrier undecaprenyl phosphate, yielding undecaprenyl-pyrophosphoryl-MurNAc-pentapeptide, known as lipid I. This is Phospho-N-acetylmuramoyl-pentapeptide-transferase from Renibacterium salmoninarum (strain ATCC 33209 / DSM 20767 / JCM 11484 / NBRC 15589 / NCIMB 2235).